A 301-amino-acid chain; its full sequence is Probable alpha-L-glutamate ligase (301 aa).

Residues leucine 104–glutamate 287 enclose the ATP-grasp domain. ATP-binding positions include lysine 141, glutamate 178–phenylalanine 179, aspartate 187, and arginine 211–asparagine 213. Mg(2+)-binding residues include aspartate 248, glutamate 260, and asparagine 262. Residues aspartate 248, glutamate 260, and asparagine 262 each contribute to the Mn(2+) site.

The protein belongs to the RimK family. Mg(2+) serves as cofactor. It depends on Mn(2+) as a cofactor.

This Shewanella loihica (strain ATCC BAA-1088 / PV-4) protein is Probable alpha-L-glutamate ligase.